Here is a 151-residue protein sequence, read N- to C-terminus: Probable cGMP 3',5'-cyclic phosphodiesterase subunit delta (151 aa).

It belongs to the PDE6D/unc-119 family. As to quaternary structure, interacts with Pde6.

It localises to the nucleus. Its subcellular location is the cytoplasm. In Aedes aegypti (Yellowfever mosquito), this protein is Probable cGMP 3',5'-cyclic phosphodiesterase subunit delta.